Consider the following 547-residue polypeptide: Delta-guaiene synthase 3 (547 aa).

Mg(2+) contacts are provided by Asp-299, Asp-303, and Asp-444. Positions 299 to 303 (DDTYD) match the DDXXD motif motif.

Belongs to the terpene synthase family. Mg(2+) is required as a cofactor.

The enzyme catalyses (2E,6E)-farnesyl diphosphate = delta-guaiene + diphosphate. The catalysed reaction is (2E,6E)-farnesyl diphosphate = alpha-guaiene + diphosphate. It functions in the pathway secondary metabolite biosynthesis; terpenoid biosynthesis. Sesquiterpene synthase involved in the biosynthesis of delta-guaiene (78.2%) and alpha-guaiene (20.9%), two structures composed of five- and seven-membered rings. Also produces 0.9% of alpha-humulene. The polypeptide is Delta-guaiene synthase 3 (C4) (Aquilaria crassna (Eagle wood)).